Reading from the N-terminus, the 240-residue chain is uncharacterized protein (240 aa).

This is an uncharacterized protein from Acidianus two-tailed virus (ATV).